Consider the following 265-residue polypeptide: Glutamate racemase 2 (265 aa).

Residues 7–8 and 39–40 each bind substrate; these read DS and YG. Cys-70 (proton donor/acceptor) is an active-site residue. 71–72 provides a ligand contact to substrate; it reads NT. The active-site Proton donor/acceptor is Cys-182. 183–184 provides a ligand contact to substrate; that stretch reads TH.

It belongs to the aspartate/glutamate racemases family.

The enzyme catalyses L-glutamate = D-glutamate. Its pathway is cell wall biogenesis; peptidoglycan biosynthesis. Its function is as follows. Provides the (R)-glutamate required for cell wall biosynthesis. The chain is Glutamate racemase 2 (yrpC) from Bacillus subtilis (strain 168).